Reading from the N-terminus, the 432-residue chain is MHDYVTWLRHASPYINAHRDRTFVVMLPGEGIAHPNFANIVHDLVLLHSLGVRLVLVHGSRPQIEARLAARGLTPHFHRDLRITDAPTLECVIDAVGQLRIAIEARLSMDMAASPMQGSRLRLTSGNFVTARPIGVLDGVDYHHTGEVRRIDRKGINRQLDERSIVLLSPLGYSPTGEIFNLACEDVATRAAIDLGADKLLLFGAEDGLLDEHGQLVRELRPQQVPAHLARLGSNYQGELLDAAAQACRGGVGRSHIVSYATDGALLSELFTRTGNGTLVAQEQFESLREATIEDVGGLIELISPLEEQGILVRRSREVLEREIEQFSIVEREGLIIACAALYPIADSDCGELACLAVNPDYRHGGRGDELLARIEARARAQGLKTLFVLTTRTAHWFRERGFEPSSVERMPAARASLYNYQRNSKVFEKAL.

In terms of domain architecture, N-acetyltransferase spans 286–425 (ESLREATIED…ASLYNYQRNS (140 aa)).

The protein belongs to the acetyltransferase family. ArgA subfamily.

It localises to the cytoplasm. The catalysed reaction is L-glutamate + acetyl-CoA = N-acetyl-L-glutamate + CoA + H(+). It functions in the pathway amino-acid biosynthesis; L-arginine biosynthesis; N(2)-acetyl-L-ornithine from L-glutamate: step 1/4. In Ectopseudomonas mendocina (strain ymp) (Pseudomonas mendocina), this protein is Amino-acid acetyltransferase.